We begin with the raw amino-acid sequence, 408 residues long: Acetylornithine/succinyldiaminopimelate aminotransferase (408 aa).

Pyridoxal 5'-phosphate-binding positions include 108-109 (GA) and Phe-141. Arg-144 contacts N(2)-acetyl-L-ornithine. 226 to 229 (DEIQ) provides a ligand contact to pyridoxal 5'-phosphate. Residue Lys-255 is modified to N6-(pyridoxal phosphate)lysine. Thr-283 is a binding site for N(2)-acetyl-L-ornithine. Residue Thr-284 coordinates pyridoxal 5'-phosphate.

Belongs to the class-III pyridoxal-phosphate-dependent aminotransferase family. ArgD subfamily. Homodimer. The cofactor is pyridoxal 5'-phosphate.

It localises to the cytoplasm. It catalyses the reaction N(2)-acetyl-L-ornithine + 2-oxoglutarate = N-acetyl-L-glutamate 5-semialdehyde + L-glutamate. The catalysed reaction is N-succinyl-(2S,6S)-2,6-diaminopimelate + 2-oxoglutarate = (S)-2-succinylamino-6-oxoheptanedioate + L-glutamate. It participates in amino-acid biosynthesis; L-arginine biosynthesis; N(2)-acetyl-L-ornithine from L-glutamate: step 4/4. Its pathway is amino-acid biosynthesis; L-lysine biosynthesis via DAP pathway; LL-2,6-diaminopimelate from (S)-tetrahydrodipicolinate (succinylase route): step 2/3. In terms of biological role, involved in both the arginine and lysine biosynthetic pathways. This Buchnera aphidicola subsp. Acyrthosiphon pisum (strain APS) (Acyrthosiphon pisum symbiotic bacterium) protein is Acetylornithine/succinyldiaminopimelate aminotransferase.